Reading from the N-terminus, the 188-residue chain is Protease-associated domain-containing protein 1 (188 aa).

The N-terminal stretch at 1 to 21 (MVPGAAGWCCLVLWLPACVAA) is a signal peptide. A PA domain is found at 83–163 (IQDQIALVER…RSLEQHGLPW (81 aa)). The N-linked (GlcNAc...) asparagine glycan is linked to N171.

N-glycosylated; required for efficient secretion. Highly expressed in skeletal muscle, heart and liver. Expressed at intermediate level in kidney.

Its subcellular location is the secreted. In terms of biological role, plays a role in the modulation of physical activity and adiposity. In Homo sapiens (Human), this protein is Protease-associated domain-containing protein 1.